Consider the following 412-residue polypeptide: Adipocyte plasma membrane-associated protein (412 aa).

A disordered region spans residues Met1–Ser32. Topologically, residues Met1–Arg39 are cytoplasmic. Thr19 carries the phosphothreonine modification. The helical transmembrane segment at Ala40–Leu60 threads the bilayer. Over Asp61 to Leu412 the chain is Extracellular. A glycan (N-linked (GlcNAc...) asparagine) is linked at Asn159.

Belongs to the strictosidine synthase family.

It is found in the membrane. In terms of biological role, exhibits strong arylesterase activity with beta-naphthyl acetate and phenyl acetate. May play a role in adipocyte differentiation. The sequence is that of Adipocyte plasma membrane-associated protein (APMAP) from Bos taurus (Bovine).